The following is a 147-amino-acid chain: Small ribosomal subunit protein uS12 (147 aa).

This sequence belongs to the universal ribosomal protein uS12 family. Part of the 30S ribosomal subunit.

With S4 and S5 plays an important role in translational accuracy. Located at the interface of the 30S and 50S subunits. The polypeptide is Small ribosomal subunit protein uS12 (Thermococcus celer).